The following is a 505-amino-acid chain: 2,3-bisphosphoglycerate-independent phosphoglycerate mutase (505 aa).

Mn(2+) is bound by residues Asp-11 and Ser-61. The active-site Phosphoserine intermediate is Ser-61. Residues His-122, 152–153 (RD), Arg-184, Arg-190, 258–261 (RPDR), and Lys-331 contribute to the substrate site. 5 residues coordinate Mn(2+): Asp-396, His-400, Asp-437, His-438, and His-455.

It belongs to the BPG-independent phosphoglycerate mutase family. Monomer. Requires Mn(2+) as cofactor.

The enzyme catalyses (2R)-2-phosphoglycerate = (2R)-3-phosphoglycerate. It participates in carbohydrate degradation; glycolysis; pyruvate from D-glyceraldehyde 3-phosphate: step 3/5. Its function is as follows. Catalyzes the interconversion of 2-phosphoglycerate and 3-phosphoglycerate. This Mesomycoplasma hyopneumoniae (strain J / ATCC 25934 / NCTC 10110) (Mycoplasma hyopneumoniae) protein is 2,3-bisphosphoglycerate-independent phosphoglycerate mutase.